Consider the following 490-residue polypeptide: Bifunctional protein HldE (490 aa).

The ribokinase stretch occupies residues 1–330 (MDRTNIENFL…EAMAHHALEY (330 aa)). An ATP-binding site is contributed by 205–208 (NRKE). The active site involves Asp-275. The cytidylyltransferase stretch occupies residues 356–490 (FTNGCFDLLH…ERILDRYEQG (135 aa)).

In the N-terminal section; belongs to the carbohydrate kinase PfkB family. It in the C-terminal section; belongs to the cytidylyltransferase family. As to quaternary structure, homodimer.

It carries out the reaction D-glycero-beta-D-manno-heptose 7-phosphate + ATP = D-glycero-beta-D-manno-heptose 1,7-bisphosphate + ADP + H(+). It catalyses the reaction D-glycero-beta-D-manno-heptose 1-phosphate + ATP + H(+) = ADP-D-glycero-beta-D-manno-heptose + diphosphate. It participates in nucleotide-sugar biosynthesis; ADP-L-glycero-beta-D-manno-heptose biosynthesis; ADP-L-glycero-beta-D-manno-heptose from D-glycero-beta-D-manno-heptose 7-phosphate: step 1/4. It functions in the pathway nucleotide-sugar biosynthesis; ADP-L-glycero-beta-D-manno-heptose biosynthesis; ADP-L-glycero-beta-D-manno-heptose from D-glycero-beta-D-manno-heptose 7-phosphate: step 3/4. Functionally, catalyzes the phosphorylation of D-glycero-D-manno-heptose 7-phosphate at the C-1 position to selectively form D-glycero-beta-D-manno-heptose-1,7-bisphosphate. In terms of biological role, catalyzes the ADP transfer from ATP to D-glycero-beta-D-manno-heptose 1-phosphate, yielding ADP-D-glycero-beta-D-manno-heptose. The chain is Bifunctional protein HldE from Syntrophotalea carbinolica (strain DSM 2380 / NBRC 103641 / GraBd1) (Pelobacter carbinolicus).